Consider the following 185-residue polypeptide: Prenylated Rab acceptor protein 1 (185 aa).

Topologically, residues 1–78 are cytoplasmic; the sequence is MAVEKDQQKD…RNVEYYQSNY (78 aa). The required for interaction with prenylated RAB3A and VAMP2 stretch occupies residues 30–54; the sequence is AGREWLERRRATIRSWGSFVDQRRF. 2 consecutive transmembrane segments (helical) span residues 79–94 and 95–112; these read VFVFLGLILYCVATSP and MLLVALAVFFGACYILYL. Residues 113–131 lie on the Cytoplasmic side of the membrane; the sequence is RTLQSKFVLFGREVSPAHQ. 2 helical membrane-spanning segments follow: residues 132–148 and 149–165; these read YALAGGVSFPFFWLAGA and GSAVFWVLGATLVVIGS. The interval 165–185 is required for interaction with GDI1; the sequence is SHAAFHQIEAVDGEELQMEPV. Over 166-185 the chain is Cytoplasmic; the sequence is HAAFHQIEAVDGEELQMEPV. Residues 175 to 185 are required for interaction with prenylated RAB3A and VAMP2; the sequence is VDGEELQMEPV. Residues 175–185 are homodimerization; it reads VDGEELQMEPV.

This sequence belongs to the PRA1 family. Homodimer. Interacts with VAMP2 (synaptobrevin-2), prenylated Rab proteins, GDI1, NDRG1 and PCLO.

The protein resides in the cell membrane. The protein localises to the cytoplasm. It localises to the golgi apparatus. It is found in the cytoplasmic vesicle. Its subcellular location is the secretory vesicle. The protein resides in the synaptic vesicle. Its function is as follows. General Rab protein regulator required for vesicle formation from the Golgi complex. May control vesicle docking and fusion by mediating the action of Rab GTPases to the SNARE complexes. In addition it inhibits the removal of Rab GTPases from the membrane by GDI1. The sequence is that of Prenylated Rab acceptor protein 1 (RABAC1) from Bos taurus (Bovine).